The chain runs to 544 residues: Chaperonin GroEL 1 (544 aa).

Residues 29–32 (TLGP), 86–90 (DGTTT), G413, 479–481 (NAA), and D495 each bind ATP.

The protein belongs to the chaperonin (HSP60) family. In terms of assembly, forms a cylinder of 14 subunits composed of two heptameric rings stacked back-to-back. Interacts with the co-chaperonin GroES.

It is found in the cytoplasm. It catalyses the reaction ATP + H2O + a folded polypeptide = ADP + phosphate + an unfolded polypeptide.. In terms of biological role, together with its co-chaperonin GroES, plays an essential role in assisting protein folding. The GroEL-GroES system forms a nano-cage that allows encapsulation of the non-native substrate proteins and provides a physical environment optimized to promote and accelerate protein folding. The sequence is that of Chaperonin GroEL 1 from Parasynechococcus marenigrum (strain WH8102).